Consider the following 240-residue polypeptide: MTATRRVSRPGPVRWMFYLGAVVAIAWLATQAFYFAQIAVWNYVNPRTTSFMRSDAWRLSQDRPDLSVQHTWVPYDQISRNLKRAIIASEDANFVNNNGYETDAILQAWERNKAKGKIVRGGSTITQQLARNLFLSREKSYIRKGQELIITWMLETLMDKERIFEIYLNSVEWGNGVYGAEAAAHYYFKTSASKLTAAQSARLAVMLPQPKYFDEHRGSPYLAQRSRVIARRMGAAELPD.

Residues 15–35 form a helical membrane-spanning segment; it reads WMFYLGAVVAIAWLATQAFYF.

The protein belongs to the glycosyltransferase 51 family.

The protein localises to the cell inner membrane. It carries out the reaction [GlcNAc-(1-&gt;4)-Mur2Ac(oyl-L-Ala-gamma-D-Glu-L-Lys-D-Ala-D-Ala)](n)-di-trans,octa-cis-undecaprenyl diphosphate + beta-D-GlcNAc-(1-&gt;4)-Mur2Ac(oyl-L-Ala-gamma-D-Glu-L-Lys-D-Ala-D-Ala)-di-trans,octa-cis-undecaprenyl diphosphate = [GlcNAc-(1-&gt;4)-Mur2Ac(oyl-L-Ala-gamma-D-Glu-L-Lys-D-Ala-D-Ala)](n+1)-di-trans,octa-cis-undecaprenyl diphosphate + di-trans,octa-cis-undecaprenyl diphosphate + H(+). It participates in cell wall biogenesis; peptidoglycan biosynthesis. Its function is as follows. Peptidoglycan polymerase that catalyzes glycan chain elongation from lipid-linked precursors. The chain is Biosynthetic peptidoglycan transglycosylase from Paraburkholderia xenovorans (strain LB400).